Consider the following 469-residue polypeptide: Protopanaxadiol 6-hydroxylase (469 aa).

A helical transmembrane segment spans residues 3-23 (LFISSQLLLLLVFCLFLFWNF). Cysteine 416 provides a ligand contact to heme.

The protein belongs to the cytochrome P450 family. Requires heme as cofactor. Accumulates ubiquitously in all organs of plants, including roots, stems and leaves.

The protein localises to the membrane. It carries out the reaction (20S)-protopanaxadiol + reduced [NADPH--hemoprotein reductase] + O2 = (20S)-protopanaxatriol + oxidized [NADPH--hemoprotein reductase] + H2O + H(+). The protein operates within secondary metabolite biosynthesis; terpenoid biosynthesis. Activated by N,N'-dicyclohexylcarbodiimide (DCCD) thus leading to increased ginsenosides accumulation. Its function is as follows. Component of the dammarane-type triterpene saponins (e.g. PPT-type ginsenosides or panaxosides) biosynthetic pathway. Catalyzes the formation of protopanaxatriol from protopanaxadiol during ginsenoside biosynthesis, a class of tetracyclic triterpenoid saponins. This Panax ginseng (Korean ginseng) protein is Protopanaxadiol 6-hydroxylase.